The following is a 182-amino-acid chain: Oligoribonuclease (182 aa).

In terms of domain architecture, Exonuclease spans 8 to 171 (LIWIDLEMTG…DDIRESIKEL (164 aa)). Tyr129 is an active-site residue.

It belongs to the oligoribonuclease family.

Its subcellular location is the cytoplasm. Functionally, 3'-to-5' exoribonuclease specific for small oligoribonucleotides. In Haemophilus influenzae (strain PittGG), this protein is Oligoribonuclease.